We begin with the raw amino-acid sequence, 206 residues long: Protein YmaB (206 aa).

This Bacillus subtilis (strain 168) protein is Protein YmaB (ymaB).